A 322-amino-acid chain; its full sequence is Cytochrome f (322 aa).

Positions 1–36 (MQKNRNTFSWVKEQMTRCISVSMMIYVITRASISNA) are cleaved as a signal peptide. Heme contacts are provided by Tyr-37, Cys-57, Cys-60, and His-61. Residues 288 to 308 (IQGLLFFLASVILAQIFLVLK) traverse the membrane as a helical segment.

It belongs to the cytochrome f family. As to quaternary structure, the 4 large subunits of the cytochrome b6-f complex are cytochrome b6, subunit IV (17 kDa polypeptide, petD), cytochrome f and the Rieske protein, while the 4 small subunits are PetG, PetL, PetM and PetN. The complex functions as a dimer. Heme is required as a cofactor.

Its subcellular location is the plastid. The protein resides in the chloroplast thylakoid membrane. Functionally, component of the cytochrome b6-f complex, which mediates electron transfer between photosystem II (PSII) and photosystem I (PSI), cyclic electron flow around PSI, and state transitions. The protein is Cytochrome f of Nymphaea alba (White water-lily).